The sequence spans 324 residues: D-alanine--D-alanine ligase (324 aa).

The region spanning 121–321 (NQYLKAFGVR…IKDVMTDIIE (201 aa)) is the ATP-grasp domain. Position 149–204 (149–204 (VEKIGLPCFIKPNLGGSSFGVTKVKTREQIQPAIAKAFSEAEEVMIEAFMGGTELT)) interacts with ATP. Mg(2+)-binding residues include aspartate 275, glutamate 288, and asparagine 290.

It belongs to the D-alanine--D-alanine ligase family. Requires Mg(2+) as cofactor. Mn(2+) is required as a cofactor.

The protein localises to the cytoplasm. It carries out the reaction 2 D-alanine + ATP = D-alanyl-D-alanine + ADP + phosphate + H(+). It functions in the pathway cell wall biogenesis; peptidoglycan biosynthesis. Cell wall formation. The sequence is that of D-alanine--D-alanine ligase from Bacteroides fragilis (strain ATCC 25285 / DSM 2151 / CCUG 4856 / JCM 11019 / LMG 10263 / NCTC 9343 / Onslow / VPI 2553 / EN-2).